Reading from the N-terminus, the 464-residue chain is tRNA modification GTPase MnmE (464 aa).

3 residues coordinate (6S)-5-formyl-5,6,7,8-tetrahydrofolate: Arg29, Glu91, and Arg131. Residues 226-387 (GLKVALTGKP…LINYLLKKCG (162 aa)) enclose the TrmE-type G domain. Asn236 lines the K(+) pocket. Residues 236–241 (NVGKSS), 255–261 (TDLPGTT), and 280–283 (DTAG) contribute to the GTP site. Residue Ser240 coordinates Mg(2+). K(+) contacts are provided by Thr255, Leu257, and Thr260. Thr261 lines the Mg(2+) pocket. Position 464 (Lys464) interacts with (6S)-5-formyl-5,6,7,8-tetrahydrofolate.

This sequence belongs to the TRAFAC class TrmE-Era-EngA-EngB-Septin-like GTPase superfamily. TrmE GTPase family. In terms of assembly, homodimer. Heterotetramer of two MnmE and two MnmG subunits. The cofactor is K(+).

The protein resides in the cytoplasm. In terms of biological role, exhibits a very high intrinsic GTPase hydrolysis rate. Involved in the addition of a carboxymethylaminomethyl (cmnm) group at the wobble position (U34) of certain tRNAs, forming tRNA-cmnm(5)s(2)U34. This chain is tRNA modification GTPase MnmE, found in Prochlorococcus marinus (strain NATL2A).